The chain runs to 185 residues: 16S rRNA aminocarboxypropyltransferase (185 aa).

S-adenosyl-L-methionine is bound by residues T19, I69, L93, Y108, and T112.

It belongs to the TDD superfamily. TSR3 family.

It localises to the cytoplasm. The enzyme catalyses an N(1)-methylpseudouridine in rRNA + S-adenosyl-L-methionine = N(1)-methyl-N(3)-[(3S)-3-amino-3-carboxypropyl]pseudouridine in rRNA + S-methyl-5'-thioadenosine + H(+). Functionally, aminocarboxypropyltransferase that catalyzes the aminocarboxypropyl transfer on pseudouridine corresponding to position 914 in M.jannaschii 16S rRNA. It constitutes the last step in biosynthesis of the hypermodified N1-methyl-N3-(3-amino-3-carboxypropyl) pseudouridine (m1acp3-Psi). The polypeptide is 16S rRNA aminocarboxypropyltransferase (Vulcanisaeta distributa (strain DSM 14429 / JCM 11212 / NBRC 100878 / IC-017)).